Here is a 109-residue protein sequence, read N- to C-terminus: Mitochondrial import inner membrane translocase subunit TIM12 (109 aa).

Serine 2 carries the post-translational modification N-acetylserine. Residues 40-66 carry the Twin CX3C motif motif; the sequence is CLEKCIPHEGFGEPDLTKGEQCCIDRC. Disulfide bonds link cysteine 40/cysteine 66 and cysteine 44/cysteine 62.

It belongs to the small Tim family. As to quaternary structure, component of the TIM22 complex, whose core is composed of TIM18, TIM22 and TIM54, associated with the peripheral proteins MRS5/TIM12 and the 70 kDa heterohexamer composed of TIM9 and TIM10 (or TIM8 and TIM13). Interacts directly with both the TIM22 protein and the TIM9-TIM10 heterohexamer. Interacts with multi-pass transmembrane proteins in transit.

It localises to the mitochondrion inner membrane. The protein resides in the mitochondrion intermembrane space. In terms of biological role, essential component of the TIM22 complex, a complex that mediates the import and insertion of multi-pass transmembrane proteins into the mitochondrial inner membrane. The TIM22 complex forms a twin-pore translocase that uses the membrane potential as external driving force. In the TIM22 complex, it acts as a docking point for the soluble TIM9-TIM10 heterohexamer that guides the target proteins in transit through the aqueous mitochondrial intermembrane space. The polypeptide is Mitochondrial import inner membrane translocase subunit TIM12 (TIM12) (Saccharomyces cerevisiae (strain ATCC 204508 / S288c) (Baker's yeast)).